A 198-amino-acid polypeptide reads, in one-letter code: MQNITIINTRCANLSSVKFAFDRLGYHTEITDNIEKIQSADKLILPGVGTAKAAMQNLADLGLIEVIQSLTQPVLGICLGMQLMTDYSEEGNLDLLKLMSGKTEKLPDCQLPLPHMGWNKVHYAADHPLFAEIAQDSYFYFVHSYGVLPNPHTVATCDYGVPFSAVIQHNNFYGAQFHPERSGKAGALFLRNFVENIK.

Positions Asn-3–Lys-198 constitute a Glutamine amidotransferase type-1 domain. The active-site Nucleophile is Cys-78. Residues His-178 and Glu-180 contribute to the active site.

As to quaternary structure, heterodimer of HisH and HisF.

The protein localises to the cytoplasm. The catalysed reaction is 5-[(5-phospho-1-deoxy-D-ribulos-1-ylimino)methylamino]-1-(5-phospho-beta-D-ribosyl)imidazole-4-carboxamide + L-glutamine = D-erythro-1-(imidazol-4-yl)glycerol 3-phosphate + 5-amino-1-(5-phospho-beta-D-ribosyl)imidazole-4-carboxamide + L-glutamate + H(+). The enzyme catalyses L-glutamine + H2O = L-glutamate + NH4(+). The protein operates within amino-acid biosynthesis; L-histidine biosynthesis; L-histidine from 5-phospho-alpha-D-ribose 1-diphosphate: step 5/9. Its function is as follows. IGPS catalyzes the conversion of PRFAR and glutamine to IGP, AICAR and glutamate. The HisH subunit catalyzes the hydrolysis of glutamine to glutamate and ammonia as part of the synthesis of IGP and AICAR. The resulting ammonia molecule is channeled to the active site of HisF. The polypeptide is Imidazole glycerol phosphate synthase subunit HisH (hisH) (Pasteurella multocida (strain Pm70)).